We begin with the raw amino-acid sequence, 347 residues long: Holliday junction branch migration complex subunit RuvB (347 aa).

The tract at residues 1 to 183 (MTDVPRMVTP…FGIPVRLNFY (183 aa)) is large ATPase domain (RuvB-L). ATP is bound by residues leucine 22, arginine 23, glycine 64, lysine 67, threonine 68, threonine 69, 130–132 (EDF), arginine 173, tyrosine 183, and arginine 220. Residue threonine 68 coordinates Mg(2+). Positions 184 to 254 (TVDELEKIVS…IADHALGALE (71 aa)) are small ATPAse domain (RuvB-S). Residues 257 to 347 (AAGLDAMDRR…QFGLFGGEDE (91 aa)) form a head domain (RuvB-H) region. Residues arginine 293, arginine 312, and arginine 317 each contribute to the DNA site.

It belongs to the RuvB family. As to quaternary structure, homohexamer. Forms an RuvA(8)-RuvB(12)-Holliday junction (HJ) complex. HJ DNA is sandwiched between 2 RuvA tetramers; dsDNA enters through RuvA and exits via RuvB. An RuvB hexamer assembles on each DNA strand where it exits the tetramer. Each RuvB hexamer is contacted by two RuvA subunits (via domain III) on 2 adjacent RuvB subunits; this complex drives branch migration. In the full resolvosome a probable DNA-RuvA(4)-RuvB(12)-RuvC(2) complex forms which resolves the HJ.

It is found in the cytoplasm. The catalysed reaction is ATP + H2O = ADP + phosphate + H(+). In terms of biological role, the RuvA-RuvB-RuvC complex processes Holliday junction (HJ) DNA during genetic recombination and DNA repair, while the RuvA-RuvB complex plays an important role in the rescue of blocked DNA replication forks via replication fork reversal (RFR). RuvA specifically binds to HJ cruciform DNA, conferring on it an open structure. The RuvB hexamer acts as an ATP-dependent pump, pulling dsDNA into and through the RuvAB complex. RuvB forms 2 homohexamers on either side of HJ DNA bound by 1 or 2 RuvA tetramers; 4 subunits per hexamer contact DNA at a time. Coordinated motions by a converter formed by DNA-disengaged RuvB subunits stimulates ATP hydrolysis and nucleotide exchange. Immobilization of the converter enables RuvB to convert the ATP-contained energy into a lever motion, pulling 2 nucleotides of DNA out of the RuvA tetramer per ATP hydrolyzed, thus driving DNA branch migration. The RuvB motors rotate together with the DNA substrate, which together with the progressing nucleotide cycle form the mechanistic basis for DNA recombination by continuous HJ branch migration. Branch migration allows RuvC to scan DNA until it finds its consensus sequence, where it cleaves and resolves cruciform DNA. The chain is Holliday junction branch migration complex subunit RuvB from Nitrobacter hamburgensis (strain DSM 10229 / NCIMB 13809 / X14).